We begin with the raw amino-acid sequence, 326 residues long: MKKKIAIAMGGYSSEYRISINSGNIVYKHLDHDLYEPYRVHILKGEWFVVADDDTPYPINKSNFTVKINDKVIQFDCVFNTIHGTPGENGLLQAYLELIGIPQTSCDYYQSALTFNKRDLISVLRPYGIKAATNYFLNKDQEINTKEIVDKVGLPCFVKANRAGSSFGVTKVKTEDEIISAAKTAFTEDDEAIIESFLDGTEVSVGVITYKGKVLALPVTEIIPDGEFFDYEAKYLGKSQEITPARISEEDTKKVQDIAIMIYKKLKMKGLSRSEFIFHEGEPHFIEMNTNPGISQASILPQQAEKAGISLKDLFGSTIEAALNQK.

One can recognise an ATP-grasp domain in the interval 121–320 (ISVLRPYGIK…LKDLFGSTIE (200 aa)). 149–204 (VDKVGLPCFVKANRAGSSFGVTKVKTEDEIISAAKTAFTEDDEAIIESFLDGTEVS) is a binding site for ATP. Mg(2+) contacts are provided by glutamate 275, glutamate 287, and asparagine 289.

It belongs to the D-alanine--D-alanine ligase family. It depends on Mg(2+) as a cofactor. Mn(2+) is required as a cofactor.

The protein localises to the cytoplasm. It carries out the reaction 2 D-alanine + ATP = D-alanyl-D-alanine + ADP + phosphate + H(+). Its pathway is cell wall biogenesis; peptidoglycan biosynthesis. Functionally, cell wall formation. The chain is D-alanine--D-alanine ligase from Christiangramia forsetii (strain DSM 17595 / CGMCC 1.15422 / KT0803) (Gramella forsetii).